We begin with the raw amino-acid sequence, 205 residues long: Putative 3-methyladenine DNA glycosylase (205 aa).

This sequence belongs to the DNA glycosylase MPG family.

This chain is Putative 3-methyladenine DNA glycosylase, found in Staphylococcus epidermidis (strain ATCC 35984 / DSM 28319 / BCRC 17069 / CCUG 31568 / BM 3577 / RP62A).